We begin with the raw amino-acid sequence, 441 residues long: MNRRQQVKRRVGKYEVGRTIGEGTFAKVKFARNSETGEPVALKILDKEKVLKHKMAEQIRREIATMKLIKHPNVVQLYEVMASKTKIFIILEYVTGGELFDKIVNDGRMKEDEARRYFQQLIHAVDYCHSRGVYHRDLKPENLLLDSYGNLKISDFGLSALSQQVRDDGLLHTSCGTPNYVAPEVLNDRGYDGATADMWSCGVVLYVLLAGYLPFDDSNLMNLYKKISSGEFNCPPWLSLGAMKLITRILDPNPMTRVTPQEVFEDEWFKKDYKPPVFEERDDSNMDDIDAVFKDSEEHLVTEKREEQPAAINAFEIISMSRGLNLENLFDPEQEFKRETRITLRGGANEIIEKIEEAAKPLGFDVQKKNYKMRLENVKAGRKGNLNVATEIFQVAPSLHMVQVSKSKGDTLEFHKFYKKLSNSLEQVVWTNNEVKKETAK.

A Protein kinase domain is found at 14 to 269; it reads YEVGRTIGEG…PQEVFEDEWF (256 aa). Residues 20 to 28 and K43 each bind ATP; that span reads IGEGTFAKV. The active-site Proton acceptor is D137. The tract at residues 155 to 184 is activation loop; the sequence is DFGLSALSQQVRDDGLLHTSCGTPNYVAPE. One can recognise an NAF domain in the interval 307–331; the sequence is EQPAAINAFEIISMSRGLNLENLFD. Residues 337-366 form a PPI region; sequence KRETRITLRGGANEIIEKIEEAAKPLGFDV.

Belongs to the protein kinase superfamily. CAMK Ser/Thr protein kinase family. SNF1 subfamily. In terms of assembly, interacts with CBL3 and CBL9. Requires Mn(2+) as cofactor. In terms of tissue distribution, mostly expressed in germinating seeds and young seedlings. Detected at low levels in roots, stems, leaves and flowers.

It catalyses the reaction L-seryl-[protein] + ATP = O-phospho-L-seryl-[protein] + ADP + H(+). The catalysed reaction is L-threonyl-[protein] + ATP = O-phospho-L-threonyl-[protein] + ADP + H(+). Functionally, involved in the resistance to some abiotic stresses (e.g. high salt, hyperosmotic stress) in young seedlings, by regulating the expression of several stress-inducible genes (cold- and salt-induced genes but not drought-responsive genes). Required for the ABA response during germination. CIPK serine-threonine protein kinases interact with CBL proteins. Binding of a CBL protein to the regulatory NAF domain of CIPK protein lead to the activation of the kinase in a calcium-dependent manner. The CBL9/CIPK3 complex acts in the regulation of abscisic acid response in seed germination. The sequence is that of CBL-interacting serine/threonine-protein kinase 3 (CIPK3) from Arabidopsis thaliana (Mouse-ear cress).